The sequence spans 285 residues: (3S)-malyl-CoA thioesterase (285 aa).

Residues R70 and E122 each coordinate substrate. Mg(2+) is bound by residues E122 and D148.

Belongs to the HpcH/HpaI aldolase family. As to quaternary structure, homodimer or homotrimer. Mg(2+) serves as cofactor.

It carries out the reaction (S)-malyl-CoA + H2O = (S)-malate + CoA + H(+). Functionally, catalyzes the hydrolysis of (3S)-malyl-CoA to (3S)-malate and free CoA. Inactive towards beta-methylmalyl-CoA and other CoA esters. This chain is (3S)-malyl-CoA thioesterase, found in Cereibacter sphaeroides (strain KD131 / KCTC 12085) (Rhodobacter sphaeroides).